We begin with the raw amino-acid sequence, 519 residues long: NAD-dependent histone deacetylase SIR2 (519 aa).

The tract at residues 154-212 is disordered; that stretch reads EIDENDNKNDGTNNSDIDSDIDSNSDMDSQSESGELDDAMDVDDSLSENEDEYDQDMST. The span at 187–208 shows a compositional bias: acidic residues; sequence GELDDAMDVDDSLSENEDEYDQ. In terms of domain architecture, Deacetylase sirtuin-type spans 221–486; the sequence is MTPFKYKLPD…SYLCKCLKWD (266 aa). NAD(+) is bound by residues 246–265 and 328–331; these read GAGI…KGLY and QNID. Residue H348 is the Proton acceptor of the active site. 4 residues coordinate Zn(2+): C356, C359, C380, and C383. NAD(+) contacts are provided by residues 430 to 432, 455 to 457, and C472; these read GTS and NKD.

Belongs to the sirtuin family. Class I subfamily. Interacts with HXK1. The cofactor is Zn(2+).

The protein resides in the nucleus. The catalysed reaction is N(6)-acetyl-L-lysyl-[protein] + NAD(+) + H2O = 2''-O-acetyl-ADP-D-ribose + nicotinamide + L-lysyl-[protein]. Functionally, NAD-dependent deacetylase. Heterochromatin component that silences transcription at silent mating loci, telomeres and the ribosomal DNA, and that also suppresses recombination in the rDNA and extends replicative life span. It acts as a NAD-dependent histone deacetylase, which deacetylates 'Lys-9' and 'Lys-14' of Histone H3 and 'Lys-16' of Histone H4. Functions in the distribution of oxidatively damaged proteins during cell division. Mediates phenotypic switching. In Candida albicans (strain SC5314 / ATCC MYA-2876) (Yeast), this protein is NAD-dependent histone deacetylase SIR2.